The chain runs to 208 residues: Cysteine-rich protein 2 (208 aa).

One can recognise an LIM zinc-binding 1 domain in the interval 5 to 57; the sequence is CPKCDKTVYFAEKVSSLGKDWHRFCLRCEHCSKTLTPGGHAEHDGKPFCHKPC. Lys-23 carries the post-translational modification N6-acetyllysine. Positions 98–117 are disordered; it reads TEERKASGPPKGPSKASSVT. Ser-104 carries the post-translational modification Phosphoserine. Over residues 104-115 the composition is skewed to low complexity; that stretch reads SGPPKGPSKASS. In terms of domain architecture, LIM zinc-binding 2 spans 126 to 178; the sequence is CPRCNKRVYFAEKVTSLGKDWHRPCLRCERCGKTLTPGGHAEHDGQPYCHKPC. 2 positions are modified to N6-acetyllysine: Lys-138 and Lys-144.

In terms of assembly, interacts with TGFB1I1.

The chain is Cysteine-rich protein 2 (CRIP2) from Bos taurus (Bovine).